Reading from the N-terminus, the 128-residue chain is Large ribosomal subunit protein bL20 (128 aa).

Belongs to the bacterial ribosomal protein bL20 family.

Binds directly to 23S ribosomal RNA and is necessary for the in vitro assembly process of the 50S ribosomal subunit. It is not involved in the protein synthesizing functions of that subunit. The protein is Large ribosomal subunit protein bL20 of Kocuria rhizophila (strain ATCC 9341 / DSM 348 / NBRC 103217 / DC2201).